A 370-amino-acid chain; its full sequence is Pulmonary surfactant-associated protein B (370 aa).

The signal sequence occupies residues Met1 to Ala24. The propeptide occupies Val25–Arg184. One can recognise a Saposin A-type domain in the interval Trp26–Ala66. Saposin B-type domains lie at Ala66–Ser148, Pro188–Asp265, and Gln284–Leu359. 9 disulfide bridges follow: Cys70-Cys144, Cys73-Cys138, Cys101-Cys113, Cys192-Cys261, Cys195-Cys255, Cys219-Cys230, Cys288-Cys355, Cys291-Cys349, and Cys314-Cys324. Positions Val264 to Phe370 are excised as a propeptide. Asn300 carries an N-linked (GlcNAc...) asparagine glycan.

Homodimer; disulfide-linked.

It is found in the secreted. The protein localises to the extracellular space. The protein resides in the surface film. Functionally, pulmonary surfactant-associated proteins promote alveolar stability by lowering the surface tension at the air-liquid interface in the peripheral air spaces. SP-B increases the collapse pressure of palmitic acid to nearly 70 millinewtons per meter. In Oryctolagus cuniculus (Rabbit), this protein is Pulmonary surfactant-associated protein B (SFTPB).